A 238-amino-acid chain; its full sequence is MGRKWANIVAKKTAKDGANSKVYAKFGVEIYVAAKQGEPDPESNSALKFVLERAKQAQVPKHVIDKAIDKAKGNTDETFVEGRYEGFGPNGSMIIVDTLTSNVNRTAANLRTAFGKNGGNMGAAGSVSYMFDKKGVIVFAGDDADSIFEQLLEADIDVEDVEAEDGSVTVYTAPTDLHRGIEALRAGGVAEFQVTELEMIPQSEVTLEGEDLETFEKLIDALEDDDDVQKVYHNVDGL.

It belongs to the TACO1 family. YeeN subfamily.

It localises to the cytoplasm. This is Probable transcriptional regulatory protein SMU_1789c from Streptococcus mutans serotype c (strain ATCC 700610 / UA159).